A 385-amino-acid chain; its full sequence is Aspartate carbamoyltransferase 2, chloroplastic (385 aa).

A chloroplast-targeting transit peptide spans M1–S30. Carbamoyl phosphate is bound by residues R131 and T132. Residues R131 and T132 each contribute to the UMP site. Residue K161 coordinates L-aspartate. The carbamoyl phosphate site is built by R182, H210, and Q213. Positions 182 and 210 each coordinate UMP. Positions 243 and 305 each coordinate UMP. L-aspartate is bound by residues R243 and R305. Residues L345 and P346 each contribute to the carbamoyl phosphate site.

Belongs to the aspartate/ornithine carbamoyltransferase superfamily. ATCase family. In terms of assembly, homotrimer.

It localises to the plastid. The protein resides in the chloroplast. It catalyses the reaction carbamoyl phosphate + L-aspartate = N-carbamoyl-L-aspartate + phosphate + H(+). It participates in pyrimidine metabolism; UMP biosynthesis via de novo pathway; (S)-dihydroorotate from bicarbonate: step 2/3. With respect to regulation, feedback inhibited by UMP. Catalyzes the condensation of carbamoyl phosphate and aspartate to form carbamoyl aspartate and inorganic phosphate, the committed step in the de novo pyrimidine nucleotide biosynthesis pathway. The polypeptide is Aspartate carbamoyltransferase 2, chloroplastic (PYRB2) (Pisum sativum (Garden pea)).